The sequence spans 126 residues: RutC family protein SSO3206 (126 aa).

This sequence belongs to the RutC family.

This Saccharolobus solfataricus (strain ATCC 35092 / DSM 1617 / JCM 11322 / P2) (Sulfolobus solfataricus) protein is RutC family protein SSO3206.